Here is a 312-residue protein sequence, read N- to C-terminus: Ribosomal RNA small subunit methyltransferase H (312 aa).

Residues 33–35 (AGH), aspartate 53, phenylalanine 79, aspartate 100, and glutamine 107 contribute to the S-adenosyl-L-methionine site.

The protein belongs to the methyltransferase superfamily. RsmH family.

It localises to the cytoplasm. It carries out the reaction cytidine(1402) in 16S rRNA + S-adenosyl-L-methionine = N(4)-methylcytidine(1402) in 16S rRNA + S-adenosyl-L-homocysteine + H(+). Functionally, specifically methylates the N4 position of cytidine in position 1402 (C1402) of 16S rRNA. In Clostridium acetobutylicum (strain ATCC 824 / DSM 792 / JCM 1419 / IAM 19013 / LMG 5710 / NBRC 13948 / NRRL B-527 / VKM B-1787 / 2291 / W), this protein is Ribosomal RNA small subunit methyltransferase H.